Consider the following 488-residue polypeptide: UDP-N-acetylmuramoyl-L-alanyl-D-glutamate--2,6-diaminopimelate ligase (488 aa).

UDP-N-acetyl-alpha-D-muramoyl-L-alanyl-D-glutamate is bound by residues Leu-24, Ser-26, and 41-43; that span reads HQV. 113–119 contributes to the ATP binding site; sequence GTNGKTT. Residues Asn-154, 155 to 156, Ser-182, Gln-188, and Arg-190 each bind UDP-N-acetyl-alpha-D-muramoyl-L-alanyl-D-glutamate; that span reads TT. Lys-222 is modified (N6-carboxylysine). Meso-2,6-diaminopimelate contacts are provided by residues Arg-386, 410–413, Gly-461, and Glu-465; that span reads DNPR. Positions 410–413 match the Meso-diaminopimelate recognition motif motif; sequence DNPR.

This sequence belongs to the MurCDEF family. MurE subfamily. It depends on Mg(2+) as a cofactor. In terms of processing, carboxylation is probably crucial for Mg(2+) binding and, consequently, for the gamma-phosphate positioning of ATP.

The protein resides in the cytoplasm. The enzyme catalyses UDP-N-acetyl-alpha-D-muramoyl-L-alanyl-D-glutamate + meso-2,6-diaminopimelate + ATP = UDP-N-acetyl-alpha-D-muramoyl-L-alanyl-gamma-D-glutamyl-meso-2,6-diaminopimelate + ADP + phosphate + H(+). It participates in cell wall biogenesis; peptidoglycan biosynthesis. Its function is as follows. Catalyzes the addition of meso-diaminopimelic acid to the nucleotide precursor UDP-N-acetylmuramoyl-L-alanyl-D-glutamate (UMAG) in the biosynthesis of bacterial cell-wall peptidoglycan. This is UDP-N-acetylmuramoyl-L-alanyl-D-glutamate--2,6-diaminopimelate ligase from Haemophilus influenzae (strain ATCC 51907 / DSM 11121 / KW20 / Rd).